The following is a 300-amino-acid chain: N-acetylmuramic acid 6-phosphate etherase (300 aa).

Residues 57-220 form the SIS domain; the sequence is VSAAFARQGR…SSAAMIRSGK (164 aa). Glu85 serves as the catalytic Proton donor. The active site involves Glu116.

It belongs to the GCKR-like family. MurNAc-6-P etherase subfamily. In terms of assembly, homodimer.

It catalyses the reaction N-acetyl-D-muramate 6-phosphate + H2O = N-acetyl-D-glucosamine 6-phosphate + (R)-lactate. It functions in the pathway amino-sugar metabolism; N-acetylmuramate degradation. Its pathway is amino-sugar metabolism; 1,6-anhydro-N-acetylmuramate degradation. It participates in cell wall biogenesis; peptidoglycan recycling. Functionally, specifically catalyzes the cleavage of the D-lactyl ether substituent of MurNAc 6-phosphate, producing GlcNAc 6-phosphate and D-lactate. Together with AnmK, is also required for the utilization of anhydro-N-acetylmuramic acid (anhMurNAc) either imported from the medium or derived from its own cell wall murein, and thus plays a role in cell wall recycling. In Edwardsiella ictaluri (strain 93-146), this protein is N-acetylmuramic acid 6-phosphate etherase.